We begin with the raw amino-acid sequence, 182 residues long: Putative colanic acid biosynthesis acetyltransferase WcaF (182 aa).

This sequence belongs to the transferase hexapeptide repeat family.

Its pathway is slime biogenesis; slime polysaccharide biosynthesis. The chain is Putative colanic acid biosynthesis acetyltransferase WcaF (wcaF) from Shigella flexneri.